A 951-amino-acid chain; its full sequence is WD repeat-containing and planar cell polarity effector protein fritz (951 aa).

2 WD repeats span residues 304 to 343 and 345 to 384; these read PMGA…TKYA and QIEI…IGHQ. 3 stretches are compositionally biased toward polar residues: residues 709–720, 757–771, and 818–828; these read TLKSNSSLQQAP, IPDQ…STMP, and SILSNPANPAP. Disordered regions lie at residues 709 to 776, 816 to 883, and 903 to 951; these read TLKS…SPPP, TASI…AARH, and EYLK…FGVV. A compositionally biased stretch (low complexity) spans 930–942; sequence SSKGGNSSSSSSS.

Belongs to the WD repeat fritz family.

The protein localises to the cell membrane. It is found in the cytoplasm. It localises to the cytoskeleton. The protein resides in the cilium axoneme. In terms of biological role, probable effector of the planar cell polarity signaling pathway which regulates the septin cytoskeleton in both ciliogenesis and collective cell movements. Functions cell autonomously to regulate wing cell hair polarity and number. This chain is WD repeat-containing and planar cell polarity effector protein fritz (frtz), found in Drosophila melanogaster (Fruit fly).